Consider the following 51-residue polypeptide: Large ribosomal subunit protein eL39 (51 aa).

It belongs to the eukaryotic ribosomal protein eL39 family.

The sequence is that of Large ribosomal subunit protein eL39 from Thermococcus sibiricus (strain DSM 12597 / MM 739).